An 868-amino-acid chain; its full sequence is DNA topoisomerase 1 (868 aa).

The region spanning 3-148 is the Toprim domain; the sequence is KSLVIVESPA…RFSRVVFNEI (146 aa). 2 residues coordinate Mg(2+): Glu-9 and Asp-117. The region spanning 164–581 is the Topo IA-type catalytic domain; it reads NLDRVNAQQT…QFFKDFSQQL (418 aa). Residues 198-203 are interaction with DNA; it reads SAGRVQ. Residue Tyr-325 is the O-(5'-phospho-DNA)-tyrosine intermediate of the active site. C4-type zinc fingers lie at residues 605-636, 667-694, and 716-739; these read CPTC…KERC, CPKC…NPNC, and CDKC…CTSC.

Belongs to the type IA topoisomerase family. In terms of assembly, monomer. Mg(2+) serves as cofactor.

The catalysed reaction is ATP-independent breakage of single-stranded DNA, followed by passage and rejoining.. In terms of biological role, releases the supercoiling and torsional tension of DNA, which is introduced during the DNA replication and transcription, by transiently cleaving and rejoining one strand of the DNA duplex. Introduces a single-strand break via transesterification at a target site in duplex DNA. The scissile phosphodiester is attacked by the catalytic tyrosine of the enzyme, resulting in the formation of a DNA-(5'-phosphotyrosyl)-enzyme intermediate and the expulsion of a 3'-OH DNA strand. The free DNA strand then undergoes passage around the unbroken strand, thus removing DNA supercoils. Finally, in the religation step, the DNA 3'-OH attacks the covalent intermediate to expel the active-site tyrosine and restore the DNA phosphodiester backbone. In Pasteurella multocida (strain Pm70), this protein is DNA topoisomerase 1.